The sequence spans 224 residues: Glycerol-3-phosphate acyltransferase (224 aa).

5 helical membrane-spanning segments follow: residues 14–34 (FFPL…FAVI), 64–84 (TAAI…VMLV), 98–118 (MALV…FNFA), 127–147 (LGVL…TWLI), and 160–180 (LTAA…AWYL).

This sequence belongs to the PlsY family. As to quaternary structure, probably interacts with PlsX.

The protein localises to the cell inner membrane. The catalysed reaction is an acyl phosphate + sn-glycerol 3-phosphate = a 1-acyl-sn-glycero-3-phosphate + phosphate. It functions in the pathway lipid metabolism; phospholipid metabolism. In terms of biological role, catalyzes the transfer of an acyl group from acyl-phosphate (acyl-PO(4)) to glycerol-3-phosphate (G3P) to form lysophosphatidic acid (LPA). This enzyme utilizes acyl-phosphate as fatty acyl donor, but not acyl-CoA or acyl-ACP. In Albidiferax ferrireducens (strain ATCC BAA-621 / DSM 15236 / T118) (Rhodoferax ferrireducens), this protein is Glycerol-3-phosphate acyltransferase.